A 240-amino-acid polypeptide reads, in one-letter code: 1-(5-phosphoribosyl)-5-[(5-phosphoribosylamino)methylideneamino] imidazole-4-carboxamide isomerase (240 aa).

Catalysis depends on Asp9, which acts as the Proton acceptor. Asp131 serves as the catalytic Proton donor.

Belongs to the HisA/HisF family.

The protein resides in the cytoplasm. The enzyme catalyses 1-(5-phospho-beta-D-ribosyl)-5-[(5-phospho-beta-D-ribosylamino)methylideneamino]imidazole-4-carboxamide = 5-[(5-phospho-1-deoxy-D-ribulos-1-ylimino)methylamino]-1-(5-phospho-beta-D-ribosyl)imidazole-4-carboxamide. It functions in the pathway amino-acid biosynthesis; L-histidine biosynthesis; L-histidine from 5-phospho-alpha-D-ribose 1-diphosphate: step 4/9. The sequence is that of 1-(5-phosphoribosyl)-5-[(5-phosphoribosylamino)methylideneamino] imidazole-4-carboxamide isomerase from Azobacteroides pseudotrichonymphae genomovar. CFP2.